The primary structure comprises 81 residues: Photosystem I iron-sulfur center (81 aa).

2 4Fe-4S ferredoxin-type domains span residues serine 2–tryptophan 31 and isoleucine 39–tyrosine 68. Cysteine 11, cysteine 14, cysteine 17, cysteine 21, cysteine 48, cysteine 51, cysteine 54, and cysteine 58 together coordinate [4Fe-4S] cluster.

In terms of assembly, the cyanobacterial PSI reaction center is composed of one copy each of PsaA,B,C,D,E,F,I,J,K,L,M and X, and forms trimeric complexes. The cofactor is [4Fe-4S] cluster.

It localises to the cellular thylakoid membrane. The enzyme catalyses reduced [plastocyanin] + hnu + oxidized [2Fe-2S]-[ferredoxin] = oxidized [plastocyanin] + reduced [2Fe-2S]-[ferredoxin]. Functionally, apoprotein for the two 4Fe-4S centers FA and FB of photosystem I (PSI); essential for photochemical activity. FB is the terminal electron acceptor of PSI, donating electrons to ferredoxin. The C-terminus interacts with PsaA/B/D and helps assemble the protein into the PSI complex. Required for binding of PsaD and PsaE to PSI. PSI is a plastocyanin/cytochrome c6-ferredoxin oxidoreductase, converting photonic excitation into a charge separation, which transfers an electron from the donor P700 chlorophyll pair to the spectroscopically characterized acceptors A0, A1, FX, FA and FB in turn. The polypeptide is Photosystem I iron-sulfur center (Prochlorococcus marinus (strain MIT 9211)).